The chain runs to 698 residues: Elongation factor G 1 (698 aa).

A tr-type G domain is found at Glu-8–Val-290. GTP-binding positions include Ala-17–Thr-24, Asp-88–His-92, and Asn-142–Asp-145.

This sequence belongs to the TRAFAC class translation factor GTPase superfamily. Classic translation factor GTPase family. EF-G/EF-2 subfamily.

It localises to the cytoplasm. In terms of biological role, catalyzes the GTP-dependent ribosomal translocation step during translation elongation. During this step, the ribosome changes from the pre-translocational (PRE) to the post-translocational (POST) state as the newly formed A-site-bound peptidyl-tRNA and P-site-bound deacylated tRNA move to the P and E sites, respectively. Catalyzes the coordinated movement of the two tRNA molecules, the mRNA and conformational changes in the ribosome. This Aliivibrio fischeri (strain ATCC 700601 / ES114) (Vibrio fischeri) protein is Elongation factor G 1.